Here is a 495-residue protein sequence, read N- to C-terminus: MSMLVVFLLLWGVTWGPVTEAAIFYETQPSLWAESESLLKPLANVTLTCQAHLETPDFQLFKNGVAQEPVHLDSPAIKHQFLLTGDTQGRYRCRSGLSTGWTQLSKLLELTGPKSLPAPWLSMAPVSWITPGLKTTAVCRGVLRGVTFLLRREGDHEFLEVPEAQEDVEATFPVHQPGNYSCSYRTDGEGALSEPSATVTIEELAAPPPPVLMHHGESSQVLHPGNKVTLTCVAPLSGVDFQLRRGEKELLVPRSSTSPDRIFFHLNAVALGDGGHYTCRYRLHDNQNGWSGDSAPVELILSDETLPAPEFSPEPESGRALRLRCLAPLEGARFALVREDRGGRRVHRFQSPAGTEALFELHNISVADSANYSCVYVDLKPPFGGSAPSERLELHVDGPPPRPQLRATWSGAVLAGRDAVLRCEGPIPDVTFELLREGETKAVKTVRTPGAAANLELIFVGPQHAGNYRCRYRSWVPHTFESELSDPVELLVAES.

The N-terminal stretch at 1–21 (MSMLVVFLLLWGVTWGPVTEA) is a signal peptide. Ig-like V-type domains follow at residues 22–113 (AIFY…LTGP), 114–206 (KSLP…ELAA), 207–299 (PPPP…PVEL), 300–397 (ILSD…LHVD), and 398–495 (GPPP…VAES). N44 is a glycosylation site (N-linked (GlcNAc...) (complex) asparagine). Intrachain disulfides connect C49/C93, C139/C182, C232/C279, C325/C374, and C423/C470. The N-linked (GlcNAc...) asparagine glycan is linked to N179. N-linked (GlcNAc...) asparagine glycans are attached at residues N363 and N371.

As to quaternary structure, interacts with CRISP3. Plasma.

It localises to the secreted. In Homo sapiens (Human), this protein is Alpha-1B-glycoprotein (A1BG).